A 598-amino-acid chain; its full sequence is Arylsulfate sulfotransferase AssT (598 aa).

An N-terminal signal peptide occupies residues 1 to 27 (MFDKYRKTLVAGTVAITLGLSASGVMA). 4-methylumbelliferone contacts are provided by histidine 279 and histidine 383. A disulfide bond links cysteine 445 and cysteine 451. Histidine 463 provides a ligand contact to 4-methylumbelliferone. The active-site Nucleophile; sulfurylated histidine covalent intermediate is the histidine 463.

The protein belongs to the aryl sulfotransferase family. As to quaternary structure, homodimer. The disulfide bond is crucial for enzyme activity.

Its subcellular location is the periplasm. It catalyses the reaction an aryl sulfate + a phenol = an aryl sulfate + a phenol. It carries out the reaction 4-methylumbelliferone sulfate + phenol = phenyl sulfate + 4-methylumbelliferone. Catalyzes the transfer of a sulfate group from a phenyl sulfate ester to other phenolic compounds. In vitro, is able to use 4-methylumbelliferyl sulfate and p-nitrophenyl sulfate (PNS) as donor substrates with phenol as the acceptor substrate. Cannot use 3'-phosphoadenosine-5'-phophosulfate (PAPS), the donor substrate of mammalian sulfotransferase. In Escherichia coli O6:H1 (strain CFT073 / ATCC 700928 / UPEC), this protein is Arylsulfate sulfotransferase AssT.